The following is a 209-amino-acid chain: Casparian strip membrane protein 1 (209 aa).

The Cytoplasmic portion of the chain corresponds to 1–46; the sequence is MEKSESTKIDVVETNKERKGKAPLLGKAPVVAAAVVHAKGGGAKRG. Residues 47–67 form a helical membrane-spanning segment; the sequence is IAIFDLILRIAAFASALGAAV. Topologically, residues 68–96 are extracellular; that stretch reads AMATTEETLPFFTQFFQFEASYDDLPTFT. Residues 97 to 117 form a helical membrane-spanning segment; sequence FFVVAMAIVVAYLVLSVPFSI. At 118-129 the chain is on the cytoplasmic side; the sequence is VCIVRPHAVVPR. Residues 130–150 form a helical membrane-spanning segment; sequence LLLIIFDTVIIALTTGAAGSS. The Extracellular portion of the chain corresponds to 151–179; sequence AAIVYLAHNGNQDANWLAICQQFGDFCQR. Residues 180 to 200 form a helical membrane-spanning segment; sequence VSGAVVAAFVTVVILIFLVVL. Topologically, residues 201-209 are cytoplasmic; sequence SASALRRHH.

The protein belongs to the Casparian strip membrane proteins (CASP) family. In terms of assembly, homodimer and heterodimers.

The protein localises to the cell membrane. Functionally, regulates membrane-cell wall junctions and localized cell wall deposition. Required for establishment of the Casparian strip membrane domain (CSD) and the subsequent formation of Casparian strips, a cell wall modification of the root endodermis that determines an apoplastic barrier between the intraorganismal apoplasm and the extraorganismal apoplasm and prevents lateral diffusion. This Nicotiana tabacum (Common tobacco) protein is Casparian strip membrane protein 1.